An 89-amino-acid chain; its full sequence is Phosphocarrier protein HPr (89 aa).

Residues 1 to 88 (MLKQSIEIIN…DLINGYFGEG (88 aa)) enclose the HPr domain. H15 (pros-phosphohistidine intermediate) is an active-site residue. S46 is subject to Phosphoserine; by HPrK/P.

The protein belongs to the HPr family.

It is found in the cytoplasm. With respect to regulation, phosphorylation on Ser-46 inhibits the phosphoryl transfer from enzyme I to HPr. Functionally, general (non sugar-specific) component of the phosphoenolpyruvate-dependent sugar phosphotransferase system (sugar PTS). This major carbohydrate active-transport system catalyzes the phosphorylation of incoming sugar substrates concomitantly with their translocation across the cell membrane. The phosphoryl group from phosphoenolpyruvate (PEP) is transferred to the phosphoryl carrier protein HPr by enzyme I. Phospho-HPr then transfers it to the PTS EIIA domain. The chain is Phosphocarrier protein HPr (ptsH) from Neisseria meningitidis serogroup A / serotype 4A (strain DSM 15465 / Z2491).